Reading from the N-terminus, the 205-residue chain is FAS-associated death domain protein (205 aa).

The DED domain occupies 3-81 (PFLVLLHSLS…RHDLLQRLDD (79 aa)). The Death domain occupies 97 to 181 (LQVAFDIVCD…LVADLVEEAQ (85 aa)). Positions 181 to 205 (QESVSKSENMSPVLRDSTVSSSETP) are disordered. Residue S191 is modified to Phosphoserine.

In terms of assembly, can self-associate. Component of the AIM2 PANoptosome complex, a multiprotein complex that drives inflammatory cell death (PANoptosis). Component of the death-induced signaling complex (DISC) composed of cell surface receptor FAS/CD95 or TNFRSF1A, adapter protein FADD and the CASP8 protease; recruitment of CASP8 to the complex is required for processing of CASP8 into the p18 and p10 subunits. Interacts (via death domain) with FAS (via death domain). Interacts directly (via DED domain) with NOL3 (via CARD domain); inhibits death-inducing signaling complex (DISC) assembly by inhibiting the increase in FAS-FADD binding induced by FAS activation. Interacts with CFLAR, PEA15 and MBD4. When phosphorylated, part of a complex containing HIPK3 and FAS. May interact with MAVS/IPS1. Interacts with MOCV v-CFLAR protein and PIDD1. Interacts with RIPK1 and TRADD. Interacts with stimulated TNFRSF10B. Interacts with DDX24.

The protein localises to the cytoplasm. Functionally, apoptotic adapter molecule that recruits caspases CASP8 or CASP10 to the activated FAS/CD95 or TNFRSF1A/TNFR-1 receptors. The resulting aggregate called the death-inducing signaling complex (DISC) performs CASP8 proteolytic activation. Active CASP8 initiates the subsequent cascade of caspases mediating apoptosis. Involved in interferon-mediated antiviral immune response, playing a role in the positive regulation of interferon signaling. The protein is FAS-associated death domain protein of Mus musculus (Mouse).